The chain runs to 246 residues: Ly6/PLAUR domain-containing protein 4 (246 aa).

The first 26 residues, 1-26 (MILQAWRSLQLLYLLEAISLLPCTEA), serve as a signal peptide directing secretion. Asn-117 carries N-linked (GlcNAc...) asparagine glycosylation. The 82-residue stretch at 142 to 223 (CPSCVGKHDQ…INVLDKSEAV (82 aa)) folds into the UPAR/Ly6 domain. The GPI-anchor amidated alanine moiety is linked to residue Ala-225. Positions 226-246 (GHCSQGISWSVLLCLLILLRD) are cleaved as a propeptide — removed in mature form.

It localises to the cell membrane. The sequence is that of Ly6/PLAUR domain-containing protein 4 (Lypd4) from Mus musculus (Mouse).